The sequence spans 519 residues: Cytochrome P450 52-E3 (519 aa).

The helical transmembrane segment at 10-30 threads the bilayer; sequence VLGGISVSFLLAYQAIYFYFI. Residue C461 participates in heme binding.

The protein belongs to the cytochrome P450 family. Heme is required as a cofactor.

It localises to the membrane. The catalysed reaction is an omega-methyl-long-chain fatty acid + reduced [NADPH--hemoprotein reductase] + O2 = an omega-hydroxy-long-chain fatty acid + oxidized [NADPH--hemoprotein reductase] + H2O + H(+). It carries out the reaction (9Z)-octadecenoate + reduced [NADPH--hemoprotein reductase] + O2 = 18-hydroxy-(9Z)-octadecenoate + oxidized [NADPH--hemoprotein reductase] + H2O + H(+). It catalyses the reaction hexadecanoate + reduced [NADPH--hemoprotein reductase] + O2 = 16-hydroxyhexadecanoate + oxidized [NADPH--hemoprotein reductase] + H2O + H(+). The enzyme catalyses (9Z)-hexadecenoate + reduced [NADPH--hemoprotein reductase] + O2 = (9Z)-16-hydroxyhexadec-9-enoate + oxidized [NADPH--hemoprotein reductase] + H2O + H(+). In terms of biological role, catalyzes the terminal (at the omega-position) hydroxylation of a fatty acid. Probably involved in alkane metabolism. Has minor activity toward myristic acid, palmitic acid, palmitoleic acid and oleic acid. The polypeptide is Cytochrome P450 52-E3 (Starmerella bombicola (Yeast)).